The primary structure comprises 487 residues: Glutamyl-tRNA(Gln) amidotransferase subunit A (487 aa).

Residues Lys76 and Ser151 each act as charge relay system in the active site. Ser175 (acyl-ester intermediate) is an active-site residue.

Belongs to the amidase family. GatA subfamily. As to quaternary structure, heterotrimer of A, B and C subunits.

It catalyses the reaction L-glutamyl-tRNA(Gln) + L-glutamine + ATP + H2O = L-glutaminyl-tRNA(Gln) + L-glutamate + ADP + phosphate + H(+). Functionally, allows the formation of correctly charged Gln-tRNA(Gln) through the transamidation of misacylated Glu-tRNA(Gln) in organisms which lack glutaminyl-tRNA synthetase. The reaction takes place in the presence of glutamine and ATP through an activated gamma-phospho-Glu-tRNA(Gln). The chain is Glutamyl-tRNA(Gln) amidotransferase subunit A from Azoarcus sp. (strain BH72).